The sequence spans 261 residues: Cytochrome c oxidase subunit 3 (261 aa).

The Mitochondrial matrix portion of the chain corresponds to methionine 1 to proline 15. A helical transmembrane segment spans residues tryptophan 16–tryptophan 34. Over phenylalanine 35–threonine 40 the chain is Mitochondrial intermembrane. A helical transmembrane segment spans residues threonine 41–threonine 66. The Mitochondrial matrix portion of the chain corresponds to phenylalanine 67–threonine 72. The chain crosses the membrane as a helical span at residues proline 73–serine 105. Topologically, residues leucine 106–glutamate 128 are mitochondrial intermembrane. Residues valine 129–methionine 152 traverse the membrane as a helical segment. Residues glutamate 153–asparagine 155 lie on the Mitochondrial matrix side of the membrane. The helical transmembrane segment at arginine 156–glutamate 183 threads the bilayer. The Mitochondrial intermembrane portion of the chain corresponds to alanine 184–aspartate 190. The helical transmembrane segment at glycine 191–leucine 223 threads the bilayer. Residues lysine 224 to histidine 232 lie on the Mitochondrial matrix side of the membrane. Residues phenylalanine 233–isoleucine 256 traverse the membrane as a helical segment. Over tyrosine 257–serine 261 the chain is Mitochondrial intermembrane.

The protein belongs to the cytochrome c oxidase subunit 3 family. As to quaternary structure, component of the cytochrome c oxidase (complex IV, CIV), a multisubunit enzyme composed of 14 subunits. The complex is composed of a catalytic core of 3 subunits MT-CO1, MT-CO2 and MT-CO3, encoded in the mitochondrial DNA, and 11 supernumerary subunits COX4I, COX5A, COX5B, COX6A, COX6B, COX6C, COX7A, COX7B, COX7C, COX8 and NDUFA4, which are encoded in the nuclear genome. The complex exists as a monomer or a dimer and forms supercomplexes (SCs) in the inner mitochondrial membrane with NADH-ubiquinone oxidoreductase (complex I, CI) and ubiquinol-cytochrome c oxidoreductase (cytochrome b-c1 complex, complex III, CIII), resulting in different assemblies (supercomplex SCI(1)III(2)IV(1) and megacomplex MCI(2)III(2)IV(2)).

The protein resides in the mitochondrion inner membrane. The enzyme catalyses 4 Fe(II)-[cytochrome c] + O2 + 8 H(+)(in) = 4 Fe(III)-[cytochrome c] + 2 H2O + 4 H(+)(out). Its function is as follows. Component of the cytochrome c oxidase, the last enzyme in the mitochondrial electron transport chain which drives oxidative phosphorylation. The respiratory chain contains 3 multisubunit complexes succinate dehydrogenase (complex II, CII), ubiquinol-cytochrome c oxidoreductase (cytochrome b-c1 complex, complex III, CIII) and cytochrome c oxidase (complex IV, CIV), that cooperate to transfer electrons derived from NADH and succinate to molecular oxygen, creating an electrochemical gradient over the inner membrane that drives transmembrane transport and the ATP synthase. Cytochrome c oxidase is the component of the respiratory chain that catalyzes the reduction of oxygen to water. Electrons originating from reduced cytochrome c in the intermembrane space (IMS) are transferred via the dinuclear copper A center (CU(A)) of subunit 2 and heme A of subunit 1 to the active site in subunit 1, a binuclear center (BNC) formed by heme A3 and copper B (CU(B)). The BNC reduces molecular oxygen to 2 water molecules using 4 electrons from cytochrome c in the IMS and 4 protons from the mitochondrial matrix. The polypeptide is Cytochrome c oxidase subunit 3 (MT-CO3) (Gazella spekei (Speke's gazelle)).